Here is a 529-residue protein sequence, read N- to C-terminus: Interleukin-21 receptor (529 aa).

The first 19 residues, 1-19, serve as a signal peptide directing secretion; the sequence is MPRGPVAALLLLILHGAWS. 3 disulfide bridges follow: C20-C109, C25-C35, and C65-C81. Residues 20 to 237 lie on the Extracellular side of the membrane; sequence CLDLTCYTDY…GEPEAGWDPH (218 aa). Fibronectin type-III domains are found at residues 21–118 and 119–228; these read LDLT…AESI and KPAP…TQAG. N-linked (GlcNAc...) asparagine glycosylation is found at N73, N97, N104, N125, and N182. C-linked (Man) tryptophan glycosylation occurs at W214. The WSXWS motif signature appears at 214–218; it reads WSEWS. The chain crosses the membrane as a helical span at residues 238 to 258; it reads MLLLLAVLIIVLVFMGLKIHL. The Cytoplasmic segment spans residues 259–529; that stretch reads PWRLWKKIWA…PPVDSGAQSS (271 aa). Positions 266–274 match the Box 1 motif motif; that stretch reads IWAPVPTPE. Residues 458-529 form a disordered region; the sequence is TADPTWRTGS…PPVDSGAQSS (72 aa).

Belongs to the type I cytokine receptor family. Type 4 subfamily. As to quaternary structure, heterodimer with the common gamma subunit. Associates with JAK1. In terms of processing, C-mannosylated at Trp-214 in the WSXWS motif, the sugar chain makes extensive hydrogen bonds with Asn-73 sugar, and bridges the two fibronectin domains transforming the V-shaped receptor into an A-frame. In terms of tissue distribution, selectively expressed in lymphoid tissues. Most highly expressed in thymus and spleen.

Its subcellular location is the membrane. This is a receptor for interleukin-21. The polypeptide is Interleukin-21 receptor (Il21r) (Mus musculus (Mouse)).